A 507-amino-acid chain; its full sequence is Rhomboid protease GluP (507 aa).

5 consecutive transmembrane segments (helical) span residues 179-199 (FTYL…INGG), 229-249 (IVLH…WSVG), 261-281 (FLLI…VFSP), 283-303 (PSAG…YVAL), and 312-332 (TIGT…FAVS). Catalysis depends on Ser-288, which acts as the Nucleophile. His-339 (charge relay system) is an active-site residue. Transmembrane regions (helical) follow at residues 340–360 (IGGL…KAGA) and 365–385 (LLSA…GLHS). TPR repeat units lie at residues 424–457 (ADLL…EPKD) and 458–491 (HASY…KPKE).

It belongs to the peptidase S54 family.

The protein localises to the cell membrane. The catalysed reaction is Cleaves type-1 transmembrane domains using a catalytic dyad composed of serine and histidine that are contributed by different transmembrane domains.. Its activity is regulated as follows. Inhibited by dichloroisocoumarin (DCI) and N-p-tosyl-L-phenylalanine chloromethyl ketone (TPCK), but not by other serine protease inhibitors such as sulfonyl fluoride PMSF and 4-(2-aminoethyl)benzenesulfonyl fluoride (AEBSF). Functionally, rhomboid-type serine protease that catalyzes intramembrane proteolysis. Important for normal cell division and sporulation. May act as a glucose exporter. This is Rhomboid protease GluP (gluP) from Bacillus subtilis (strain 168).